The following is a 601-amino-acid chain: Phosphomethylpyrimidine synthase (601 aa).

2 disordered regions span residues 1 to 31 (MTNK…GKSI) and 100 to 141 (AGRP…RDGQ). The span at 100–112 (AGRPVRPEDDGIK) shows a compositional bias: basic and acidic residues. Substrate contacts are provided by residues N208, M237, Y266, H302, 322-324 (SRG), 363-366 (DGLR), and E402. Residue H406 participates in Zn(2+) binding. Y429 is a binding site for substrate. H470 lines the Zn(2+) pocket. Residues C550, C553, and C558 each contribute to the [4Fe-4S] cluster site.

The protein belongs to the ThiC family. The cofactor is [4Fe-4S] cluster.

It carries out the reaction 5-amino-1-(5-phospho-beta-D-ribosyl)imidazole + S-adenosyl-L-methionine = 4-amino-2-methyl-5-(phosphooxymethyl)pyrimidine + CO + 5'-deoxyadenosine + formate + L-methionine + 3 H(+). The protein operates within cofactor biosynthesis; thiamine diphosphate biosynthesis. In terms of biological role, catalyzes the synthesis of the hydroxymethylpyrimidine phosphate (HMP-P) moiety of thiamine from aminoimidazole ribotide (AIR) in a radical S-adenosyl-L-methionine (SAM)-dependent reaction. The polypeptide is Phosphomethylpyrimidine synthase (Streptomyces avermitilis (strain ATCC 31267 / DSM 46492 / JCM 5070 / NBRC 14893 / NCIMB 12804 / NRRL 8165 / MA-4680)).